A 211-amino-acid polypeptide reads, in one-letter code: Ribosomal RNA large subunit methyltransferase E (211 aa).

Residues Gly-60, Trp-62, Asp-80, Asp-96, and Asp-121 each coordinate S-adenosyl-L-methionine. Lys-161 functions as the Proton acceptor in the catalytic mechanism.

This sequence belongs to the class I-like SAM-binding methyltransferase superfamily. RNA methyltransferase RlmE family.

Its subcellular location is the cytoplasm. It carries out the reaction uridine(2552) in 23S rRNA + S-adenosyl-L-methionine = 2'-O-methyluridine(2552) in 23S rRNA + S-adenosyl-L-homocysteine + H(+). Specifically methylates the uridine in position 2552 of 23S rRNA at the 2'-O position of the ribose in the fully assembled 50S ribosomal subunit. In Cellvibrio japonicus (strain Ueda107) (Pseudomonas fluorescens subsp. cellulosa), this protein is Ribosomal RNA large subunit methyltransferase E.